A 92-amino-acid chain; its full sequence is Small ribosomal subunit protein uS19 (92 aa).

The protein belongs to the universal ribosomal protein uS19 family.

Functionally, protein S19 forms a complex with S13 that binds strongly to the 16S ribosomal RNA. The chain is Small ribosomal subunit protein uS19 from Phenylobacterium zucineum (strain HLK1).